Here is a 147-residue protein sequence, read N- to C-terminus: Mid1-interacting protein 1-B (147 aa).

The protein belongs to the SPOT14 family.

The protein resides in the nucleus. Its subcellular location is the cytoplasm. It localises to the cytoskeleton. In terms of biological role, involved in stabilization of microtubules. May play a role in the regulation of lipogenesis. In Danio rerio (Zebrafish), this protein is Mid1-interacting protein 1-B.